The sequence spans 345 residues: Class I histocompatibility antigen, F10 alpha chain (345 aa).

The N-terminal stretch at 1–22 is a signal peptide; the sequence is MGPCGALGLGLLLAAVCGAAAP. Residues 23–110 are alpha-1; it reads ELHTLRYIQT…ILQRRYNQTG (88 aa). Residues 23–301 are Extracellular-facing; sequence ELHTLRYIQT…WEPPQPNLVP (279 aa). Asparagine 59 and asparagine 107 each carry an N-linked (GlcNAc...) asparagine glycan. An alpha-2 region spans residues 111–201; the sequence is GSHTVQWMYG…EYGKAELGRR (91 aa). Cystine bridges form between cysteine 121/cysteine 183 and cysteine 221/cysteine 277. Residues 202–292 form an alpha-3 region; the sequence is ERPEVRVWGK…SLPQPGLYSW (91 aa). Residues 204–293 enclose the Ig-like C1-type domain; that stretch reads PEVRVWGKEA…LPQPGLYSWE (90 aa). A connecting peptide region spans residues 293 to 301; sequence EPPQPNLVP. A helical transmembrane segment spans residues 302–324; the sequence is IVAGVAVAIVAIAIMVGVGFIIY. Topologically, residues 325 to 345 are cytoplasmic; it reads RRHAGKKGKGYNIAPGSNPAI.

It belongs to the MHC class I family. As to quaternary structure, heterodimer of an alpha chain and a beta chain (beta-2-microglobulin).

The protein localises to the membrane. In terms of biological role, involved in the presentation of foreign antigens to the immune system. In Gallus gallus (Chicken), this protein is Class I histocompatibility antigen, F10 alpha chain.